Here is a 288-residue protein sequence, read N- to C-terminus: CBY1-interacting BAR domain-containing protein 1 (288 aa).

Residues 1–47 (MLRRSLENRDAQTRQLQDAVTNVEKHFGELCQIFAAYVRKTARLRDK) constitute a mitochondrion transit peptide. Positions 10-220 (DAQTRQLQDA…KIDEEEDLEV (211 aa)) are BAR-like. The stretch at 107 to 176 (KMKRDDLKAT…ETIDNFEKQK (70 aa)) forms a coiled coil. A disordered region spans residues 266 to 288 (RKDHQTEDDDEEDEDLDVTEEEN). Residues 271 to 288 (TEDDDEEDEDLDVTEEEN) are compositionally biased toward acidic residues.

The protein belongs to the CIBAR family. As to quaternary structure, homodimer (via BAR-like domain). Heterodimer with FAM92B (via BAR-like domains). Interacts (via BAR-like domain) with CBY1; this interaction is required for targeting FAM92A to centriole and cilium basal body. Interacts (via BAR-like domain) with CBY3; both proteins form a ninefold symmetric structure at the flagellar base; are recruited to the annulus in a mutually dependent manner and regulate annulus positionning.

It is found in the cytoplasm. The protein localises to the cytoskeleton. The protein resides in the microtubule organizing center. Its subcellular location is the centrosome. It localises to the centriole. It is found in the cilium basal body. The protein localises to the cell projection. The protein resides in the cilium. Its subcellular location is the nucleus. It localises to the mitochondrion inner membrane. It is found in the flagellum. In terms of biological role, plays a critical role in regulating mitochondrial ultrastructure and function by maintaining the integrity of mitochondrial morphology, particularly the organization of cristae. Preferentially binds to negatively charged phospholipids like cardiolipin and phosphatidylinositol 4,5-bisphosphate enhancing its interaction with mitochondrial membranes. Induces membrane curvature and tubulation, which are critical for maintaining mitochondrial ultrastructure and the organization of cristae. Plays a crucial role in ciliogenesis. May play a role in limb development through its role in ciliogenesis. Plays a key role in the correct positioning of the annulus, a septin-based ring structure in the sperm flagellum, serving both as a physical barrier and a membrane diffusion barrier that separates the midpiece (MP) from the principal piece (PP). This positioning is essential for proper sperm motility and function. Interacts with CBY3 to form a complex which localizes to the curved membrane region of the flagellar pocket. By doing so, may provide stability and rigidity to the periannular membrane to prevent membrane deformation. This function is crucial for halting annulus migration at the proximal end of the fibrous sheath-containing PP. In Bos taurus (Bovine), this protein is CBY1-interacting BAR domain-containing protein 1.